We begin with the raw amino-acid sequence, 327 residues long: Mitochondrial carnitine carrier (327 aa).

The segment covering M1 to S11 has biased composition (low complexity). A disordered region spans residues M1–S29. 6 helical membrane passes run R33–A49, L107–G123, M141–T162, G196–F212, L244–I260, and F293–L313. Solcar repeat units follow at residues R33 to L126, L139 to Y221, and V237 to L321.

Belongs to the mitochondrial carrier (TC 2.A.29) family.

It is found in the mitochondrion inner membrane. In terms of biological role, transports carnitine, acetylcarnitine, propionylcarnitine and to a much lower extent medium- and long-chain acylcarnitines. The protein is Mitochondrial carnitine carrier (CRC1) of Saccharomyces cerevisiae (strain ATCC 204508 / S288c) (Baker's yeast).